The primary structure comprises 495 residues: Flagellin (495 aa).

It belongs to the bacterial flagellin family.

Its subcellular location is the secreted. It localises to the bacterial flagellum. In terms of biological role, flagellin is the subunit protein which polymerizes to form the filaments of bacterial flagella. In Salmonella paratyphi A (strain ATCC 9150 / SARB42), this protein is Flagellin (fliC).